Reading from the N-terminus, the 263-residue chain is HTH-type transcriptional repressor NanR (263 aa).

The disordered stretch occupies residues 1-22; it reads MGLMNAFDSQTEDSSPAIGRNL. The HTH gntR-type domain occupies 30-98; that stretch reads KKLSEMVEEE…NGERARVSRP (69 aa). Positions 58–77 form a DNA-binding region, H-T-H motif; the sequence is ERELMAFFNVGRPSVREALA.

The protein belongs to the NanR family.

In terms of biological role, transcriptional repressor that controls expression of the genes required for the catabolism of sialic acids. This chain is HTH-type transcriptional repressor NanR, found in Shigella dysenteriae serotype 1 (strain Sd197).